We begin with the raw amino-acid sequence, 190 residues long: Recombination protein RecR (190 aa).

The C4-type zinc finger occupies 58–73 (CEQCGALSENELCEIC). A Toprim domain is found at 81 to 167 (NILCIVESPK…TFSKIAQGIP (87 aa)).

Belongs to the RecR family.

May play a role in DNA repair. It seems to be involved in an RecBC-independent recombinational process of DNA repair. It may act with RecF and RecO. The protein is Recombination protein RecR of Campylobacter jejuni (strain RM1221).